The following is a 99-amino-acid chain: Large ribosomal subunit protein bL21 (99 aa).

It belongs to the bacterial ribosomal protein bL21 family. Part of the 50S ribosomal subunit. Contacts protein L20.

In terms of biological role, this protein binds to 23S rRNA in the presence of protein L20. The protein is Large ribosomal subunit protein bL21 of Mesoplasma florum (strain ATCC 33453 / NBRC 100688 / NCTC 11704 / L1) (Acholeplasma florum).